The sequence spans 426 residues: 3-phosphoshikimate 1-carboxyvinyltransferase (426 aa).

The 3-phosphoshikimate site is built by K22, S23, and R27. Phosphoenolpyruvate is bound at residue K22. The phosphoenolpyruvate site is built by G96 and R124. Residues S170, S171, Q172, S198, D314, N337, and K341 each contribute to the 3-phosphoshikimate site. Residue Q172 participates in phosphoenolpyruvate binding. Catalysis depends on D314, which acts as the Proton acceptor. Phosphoenolpyruvate contacts are provided by R345, R387, and K412.

It belongs to the EPSP synthase family. In terms of assembly, monomer.

It is found in the cytoplasm. The enzyme catalyses 3-phosphoshikimate + phosphoenolpyruvate = 5-O-(1-carboxyvinyl)-3-phosphoshikimate + phosphate. Its pathway is metabolic intermediate biosynthesis; chorismate biosynthesis; chorismate from D-erythrose 4-phosphate and phosphoenolpyruvate: step 6/7. Catalyzes the transfer of the enolpyruvyl moiety of phosphoenolpyruvate (PEP) to the 5-hydroxyl of shikimate-3-phosphate (S3P) to produce enolpyruvyl shikimate-3-phosphate and inorganic phosphate. This Colwellia psychrerythraea (strain 34H / ATCC BAA-681) (Vibrio psychroerythus) protein is 3-phosphoshikimate 1-carboxyvinyltransferase.